The primary structure comprises 345 residues: uncharacterized protein (345 aa).

Its subcellular location is the cell membrane. Functionally, involved in potassium and divalent cation transport. Enhances the transport activity of the cation/potassium transporter CzcD. This is an uncharacterized protein from Bacillus velezensis (strain DSM 23117 / BGSC 10A6 / LMG 26770 / FZB42) (Bacillus amyloliquefaciens subsp. plantarum).